The chain runs to 217 residues: KS1 protein (217 aa).

The first 16 residues, 1-16, serve as a signal peptide directing secretion; it reads MKLIIVLVMMLVCVYS. A compositionally biased stretch (basic and acidic residues) spans 24–47; that stretch reads PKNHEVPAKKQFAETKVEKKKRSD. Disordered stretches follow at residues 24-58 and 72-205; these read PKNHEVPAKKQFAETKVEKKKRSDDGDEEICDDDD and EDDD…LKIK. 2 consecutive repeat copies span residues 32–81 and 98–147. The segment at 32–147 is 2 X 50 AA approximate repeats; the sequence is KKQFAETKVE…EEDDDCYDED (116 aa). Composition is skewed to acidic residues over residues 48-58 and 72-94; these read DGDEEICDDDD and EDDDDCVDGGETEECDEDDDDCQ. Basic residues predominate over residues 98–110; the sequence is KKKKRETKPKLKK. The segment covering 114 to 145 has biased composition (acidic residues); the sequence is DEEEEECEEDDEDCEVEVDIEECDEEDDDCYD. Over residues 149 to 188 the composition is skewed to basic residues; that stretch reads KKKKENKLKKESKKKNSKKTVPKNAKKSSKRSTSTKKTSQ.

In terms of tissue distribution, expressed in tentacle-specific epithelial cells (battery cells) as well as in a small fraction of ectodermal epithelial cells in the gastric region subjacent to the tentacles (the tentacle formation region). The later cells are committed to become battery cells.

In terms of biological role, responds to early signals of head formation in hydra. This chain is KS1 protein (KS1), found in Hydra vulgaris (Hydra).